Consider the following 188-residue polypeptide: NAD(P)H-quinone oxidoreductase subunit 6, chloroplastic (188 aa).

Transmembrane regions (helical) follow at residues 10-30 (GILLIIELGILLGSMGVILLN), 32-52 (IVQSAFSLGLTFISISLLYLV), 61-81 (AQVLIYVGAINVLIVFSVMLI), 97-117 (GNNITLIVCTSLFLFLVSIIL), and 153-173 (FLLPFELLSVLLLVALVGAIT).

The protein belongs to the complex I subunit 6 family. As to quaternary structure, NDH is composed of at least 16 different subunits, 5 of which are encoded in the nucleus.

It is found in the plastid. It localises to the chloroplast thylakoid membrane. It carries out the reaction a plastoquinone + NADH + (n+1) H(+)(in) = a plastoquinol + NAD(+) + n H(+)(out). The enzyme catalyses a plastoquinone + NADPH + (n+1) H(+)(in) = a plastoquinol + NADP(+) + n H(+)(out). NDH shuttles electrons from NAD(P)H:plastoquinone, via FMN and iron-sulfur (Fe-S) centers, to quinones in the photosynthetic chain and possibly in a chloroplast respiratory chain. The immediate electron acceptor for the enzyme in this species is believed to be plastoquinone. Couples the redox reaction to proton translocation, and thus conserves the redox energy in a proton gradient. This Psilotum nudum (Whisk fern) protein is NAD(P)H-quinone oxidoreductase subunit 6, chloroplastic (ndhG).